We begin with the raw amino-acid sequence, 131 residues long: Sec-independent protein translocase protein TatB (131 aa).

A helical membrane pass occupies residues 2-22 (FDGIGFMELLLIGILGLVVLG). Polar residues-rich tracts occupy residues 68 to 83 (ESQGLKNLSPELQDSI) and 116 to 131 (AEKSTTTGANSDKPNG). The disordered stretch occupies residues 68-131 (ESQGLKNLSP…TGANSDKPNG (64 aa)).

The protein belongs to the TatB family. The Tat system comprises two distinct complexes: a TatABC complex, containing multiple copies of TatA, TatB and TatC subunits, and a separate TatA complex, containing only TatA subunits. Substrates initially bind to the TatABC complex, which probably triggers association of the separate TatA complex to form the active translocon.

It is found in the cell inner membrane. Functionally, part of the twin-arginine translocation (Tat) system that transports large folded proteins containing a characteristic twin-arginine motif in their signal peptide across membranes. Together with TatC, TatB is part of a receptor directly interacting with Tat signal peptides. TatB may form an oligomeric binding site that transiently accommodates folded Tat precursor proteins before their translocation. This Shewanella pealeana (strain ATCC 700345 / ANG-SQ1) protein is Sec-independent protein translocase protein TatB.